The following is a 906-amino-acid chain: Ribonucleoside-diphosphate reductase large subunit-like protein (906 aa).

Disordered regions lie at residues 1-70 (MNPA…AGNT) and 89-129 (VSWR…LSTF). A compositionally biased stretch (polar residues) spans 98–109 (PDGTPSVLSLTR).

This sequence belongs to the ribonucleoside diphosphate reductase large chain family.

The protein resides in the virion. The protein localises to the host cytoplasm. Functionally, does not possess a ribonucleotide reductase activity. Betaherpesviruses probably use another strategy to expand the dNTP pool in a quiescent host cell. This chain is Ribonucleoside-diphosphate reductase large subunit-like protein, found in Human cytomegalovirus (strain AD169) (HHV-5).